The chain runs to 309 residues: Branched-chain-amino-acid aminotransferase (309 aa).

The residue at position 160 (Lys-160) is an N6-(pyridoxal phosphate)lysine.

The protein belongs to the class-IV pyridoxal-phosphate-dependent aminotransferase family. In terms of assembly, homohexamer. Requires pyridoxal 5'-phosphate as cofactor.

It carries out the reaction L-leucine + 2-oxoglutarate = 4-methyl-2-oxopentanoate + L-glutamate. It catalyses the reaction L-isoleucine + 2-oxoglutarate = (S)-3-methyl-2-oxopentanoate + L-glutamate. The enzyme catalyses L-valine + 2-oxoglutarate = 3-methyl-2-oxobutanoate + L-glutamate. Its pathway is amino-acid biosynthesis; L-isoleucine biosynthesis; L-isoleucine from 2-oxobutanoate: step 4/4. It functions in the pathway amino-acid biosynthesis; L-leucine biosynthesis; L-leucine from 3-methyl-2-oxobutanoate: step 4/4. The protein operates within amino-acid biosynthesis; L-valine biosynthesis; L-valine from pyruvate: step 4/4. Acts on leucine, isoleucine and valine. This Escherichia coli O157:H7 protein is Branched-chain-amino-acid aminotransferase (ilvE).